A 402-amino-acid chain; its full sequence is S-adenosylmethionine synthase (402 aa).

H17 provides a ligand contact to ATP. Mg(2+) is bound at residue D19. E45 is a K(+) binding site. L-methionine contacts are provided by E58 and Q101. The segment at 101–111 (QSSDIADGVNE) is flexible loop. Residues 177–179 (DAK), 244–245 (RF), D253, 259–260 (RK), A276, and K280 contribute to the ATP site. An L-methionine-binding site is contributed by D253. An L-methionine-binding site is contributed by K284.

The protein belongs to the AdoMet synthase family. Homotetramer; dimer of dimers. The cofactor is Mg(2+). K(+) serves as cofactor.

The protein localises to the cytoplasm. It carries out the reaction L-methionine + ATP + H2O = S-adenosyl-L-methionine + phosphate + diphosphate. The protein operates within amino-acid biosynthesis; S-adenosyl-L-methionine biosynthesis; S-adenosyl-L-methionine from L-methionine: step 1/1. Catalyzes the formation of S-adenosylmethionine (AdoMet) from methionine and ATP. The overall synthetic reaction is composed of two sequential steps, AdoMet formation and the subsequent tripolyphosphate hydrolysis which occurs prior to release of AdoMet from the enzyme. The protein is S-adenosylmethionine synthase of Lactobacillus johnsonii (strain CNCM I-12250 / La1 / NCC 533).